A 45-amino-acid polypeptide reads, in one-letter code: Defensin Tk-AMP-D3 (45 aa).

Intrachain disulfides connect Cys3-Cys45, Cys14-Cys34, Cys20-Cys39, and Cys24-Cys41.

In terms of biological role, plant defense peptide. This is Defensin Tk-AMP-D3 from Triticum kiharae (Wheat).